A 142-amino-acid polypeptide reads, in one-letter code: Large ribosomal subunit protein uL11 (142 aa).

The tract at residues 84–103 is disordered; sequence AGVKSGSGRPNSDKVGTVTD.

This sequence belongs to the universal ribosomal protein uL11 family. In terms of assembly, part of the ribosomal stalk of the 50S ribosomal subunit. Interacts with L10 and the large rRNA to form the base of the stalk. L10 forms an elongated spine to which L12 dimers bind in a sequential fashion forming a multimeric L10(L12)X complex. Post-translationally, one or more lysine residues are methylated.

In terms of biological role, forms part of the ribosomal stalk which helps the ribosome interact with GTP-bound translation factors. The chain is Large ribosomal subunit protein uL11 from Aliivibrio salmonicida (strain LFI1238) (Vibrio salmonicida (strain LFI1238)).